Reading from the N-terminus, the 298-residue chain is Lipoyl synthase (298 aa).

C40, C45, C51, C67, C71, C74, and S280 together coordinate [4Fe-4S] cluster. The region spanning 53 to 269 (AVRKTATFMI…KEIALSKGFS (217 aa)) is the Radical SAM core domain.

The protein belongs to the radical SAM superfamily. Lipoyl synthase family. Requires [4Fe-4S] cluster as cofactor.

The protein localises to the cytoplasm. It catalyses the reaction [[Fe-S] cluster scaffold protein carrying a second [4Fe-4S](2+) cluster] + N(6)-octanoyl-L-lysyl-[protein] + 2 oxidized [2Fe-2S]-[ferredoxin] + 2 S-adenosyl-L-methionine + 4 H(+) = [[Fe-S] cluster scaffold protein] + N(6)-[(R)-dihydrolipoyl]-L-lysyl-[protein] + 4 Fe(3+) + 2 hydrogen sulfide + 2 5'-deoxyadenosine + 2 L-methionine + 2 reduced [2Fe-2S]-[ferredoxin]. The protein operates within protein modification; protein lipoylation via endogenous pathway; protein N(6)-(lipoyl)lysine from octanoyl-[acyl-carrier-protein]. Functionally, catalyzes the radical-mediated insertion of two sulfur atoms into the C-6 and C-8 positions of the octanoyl moiety bound to the lipoyl domains of lipoate-dependent enzymes, thereby converting the octanoylated domains into lipoylated derivatives. This Bacillus cytotoxicus (strain DSM 22905 / CIP 110041 / 391-98 / NVH 391-98) protein is Lipoyl synthase.